The following is a 314-amino-acid chain: 1,4-dihydroxy-2-naphthoyl-CoA synthase (314 aa).

Substrate contacts are provided by residues R58, 103–107 (SGGDQ), Y115, 157–161 (WAAGG), T184, S190, Y287, and K302.

Belongs to the enoyl-CoA hydratase/isomerase family. MenB subfamily.

It carries out the reaction 2-succinylbenzoyl-CoA + H(+) = 1,4-dihydroxy-2-naphthoyl-CoA + H2O. Its pathway is quinol/quinone metabolism; 1,4-dihydroxy-2-naphthoate biosynthesis; 1,4-dihydroxy-2-naphthoate from chorismate: step 6/7. The protein operates within quinol/quinone metabolism; menaquinone biosynthesis. Its function is as follows. Converts o-succinylbenzoyl-CoA (OSB-CoA) to 1,4-dihydroxy-2-naphthoyl-CoA (DHNA-CoA). The chain is 1,4-dihydroxy-2-naphthoyl-CoA synthase from Mycobacterium tuberculosis (strain CDC 1551 / Oshkosh).